Here is a 207-residue protein sequence, read N- to C-terminus: Putative 3-methyladenine DNA glycosylase (207 aa).

This sequence belongs to the DNA glycosylase MPG family.

The chain is Putative 3-methyladenine DNA glycosylase from Listeria welshimeri serovar 6b (strain ATCC 35897 / DSM 20650 / CCUG 15529 / CIP 8149 / NCTC 11857 / SLCC 5334 / V8).